The sequence spans 786 residues: Cyclin-F (786 aa).

A Nuclear localization signal 1 motif is present at residues 20–28 (KRRIRRRPR). Residues 29–76 (NLTILSLPEDVLFHILKWLSVEDILAVRAVHSQLKDLVDNHASVWACA) enclose the F-box domain. A Cyclin N-terminal domain is found at 288 to 405 (QASQAVSKQQ…EIVSALEGKI (118 aa)). Short sequence motifs (d box) lie at residues 310–313 (RYIL), 343–346 (RRRL), 349–352 (RYRL), and 351–354 (RLQL). Disordered regions lie at residues 564–593 (SPSG…TAEL) and 675–738 (TQIP…HTQP). The Nuclear localization signal 2 motif lies at 568 to 574 (RRTKRKR). Residues 582 to 766 (RGSFVTTPTA…ESSVPQQQVK (185 aa)) form a PEST region. Low complexity predominate over residues 697 to 714 (VTTSGYSSVSTASPTSSV). A compositionally biased stretch (polar residues) spans 723 to 738 (QPTSVLSLDSDSHTQP). A D box 5 motif is present at residues 767–770 (RINL).

Belongs to the cyclin family. Cyclin AB subfamily. As to quaternary structure, component of the SCF(CCNF) complex consisting of CUL1, RBX1, SKP1 and CCNF. Interacts with SKP1. Interacts with CUL1. Interacts with CCNB1; interaction is required for nuclear localization of CCNB1. Interacts with CCP110; this interaction leads to CCP110 ubiquitination and degradation via the proteasome pathway. Interacts (via the Cyclin N-terminal domain) with MYBL2/BMYB. Interacts with FZR1/CDH1 (via N-terminus). Interacts with RRM2 (via Cy motif and when phosphorylated at 'Thr-33'); the interaction occurs exclusively in G2 and early M. Interacts with CDC6 (via Cy motif); the interaction takes place during G2 and M phase. Degraded when the spindle assembly checkpoint is activated during the G2-M transition. Degradation depends on the C-terminal PEST sequence. In terms of processing, phosphorylated just before cells enter into mitosis. Post-translationally, ubiquitinated by the anaphase-promoting complex (APC/C); leading to its degradation by the proteasome. As to expression, widely expressed, with expression detected in the heart, brain, placenta, lung, liver, skeletal muscle, kidney and pancreas.

It is found in the nucleus. It localises to the cytoplasm. The protein localises to the perinuclear region. Its subcellular location is the cytoskeleton. The protein resides in the microtubule organizing center. It is found in the centrosome. It localises to the centriole. Functionally, substrate recognition component of a SCF (SKP1-CUL1-F-box protein) E3 ubiquitin-protein ligase complex which mediates the ubiquitination and subsequent proteasomal degradation of target proteins. The SCF(CCNF) E3 ubiquitin-protein ligase complex is an integral component of the ubiquitin proteasome system (UPS) and links proteasome degradation to the cell cycle. Mediates the substrate recognition and the proteasomal degradation of various target proteins involved in the regulation of cell cycle progression and in the maintenance of genome stability. Mediates the ubiquitination and proteasomal degradation of CP110 during G2 phase, thereby acting as an inhibitor of centrosome reduplication. In G2, mediates the ubiquitination and subsequent degradation of ribonucleotide reductase RRM2, thereby maintaining a balanced pool of dNTPs and genome integrity. In G2, mediates the ubiquitination and proteasomal degradation of CDC6, thereby suppressing DNA re-replication and preventing genome instability. Involved in the ubiquitination and degradation of the substrate adapter CDH1 of the anaphase-promoting complex (APC/C), thereby acting as an antagonist of APC/C in regulating G1 progression and S phase entry. May play a role in the G2 cell cycle checkpoint control after DNA damage, possibly by promoting the ubiquitination of MYBL2/BMYB. The polypeptide is Cyclin-F (CCNF) (Homo sapiens (Human)).